The following is a 104-amino-acid chain: Nucleoid-associated protein jk2011 (104 aa).

The protein belongs to the YbaB/EbfC family. As to quaternary structure, homodimer.

The protein localises to the cytoplasm. It is found in the nucleoid. Functionally, binds to DNA and alters its conformation. May be involved in regulation of gene expression, nucleoid organization and DNA protection. This chain is Nucleoid-associated protein jk2011, found in Corynebacterium jeikeium (strain K411).